The sequence spans 371 residues: SufE-like protein 1, chloroplastic/mitochondrial (371 aa).

The N-terminal 66 residues, 1-66, are a transit peptide targeting the chloroplast and mitochondrion; sequence MAAAMSSSCC…ISTGIVPPPS (66 aa). Catalysis depends on Cys131, which acts as the Cysteine persulfide intermediate. An S-glutathionyl cysteine modification is found at Cys131. The tract at residues 218–249 is disordered; it reads VKGEEDSSSGESSESSFVSIPETKDEANVPEV.

It belongs to the SufE family. In terms of assembly, heterotetramer with NFS2. Interacts with NFS2 and NIFS1. Interacts in vitro with GRXS14, GRXS15, GRXS16 and GRXS17, but not with GRXC5. Interacts in vivo only with GRXS14 and GRXS16. Glutathionylated. Glutathionylation strongly reduces the stimulation of NFS2 activity. In terms of tissue distribution, expressed in roots, leaves, stems and flowers.

It localises to the plastid. The protein resides in the chloroplast stroma. It is found in the mitochondrion. It functions in the pathway cofactor biosynthesis; iron-sulfur cluster biosynthesis. Functionally, participates in cysteine desulfurization mediated by NFS2 in chloroplast and NIFS1 in mitochondrion. Activates the cysteine desulfurase activity of NFS2. Cysteine desulfurization mobilizes sulfur from L-cysteine to yield L-alanine and supplies the inorganic sulfur for iron-sulfur (Fe-S) cluster formation. Glutaredoxins regulate SUFE1 activity by inducing its reduction and deglutathionylation. The sequence is that of SufE-like protein 1, chloroplastic/mitochondrial from Arabidopsis thaliana (Mouse-ear cress).